Consider the following 212-residue polypeptide: Large ribosomal subunit protein uL3 (212 aa).

The tract at residues 131–155 (RGNMTHGSKNHRLPGSTGAGTTPGR) is disordered.

The protein belongs to the universal ribosomal protein uL3 family. In terms of assembly, part of the 50S ribosomal subunit. Forms a cluster with proteins L14 and L19.

Functionally, one of the primary rRNA binding proteins, it binds directly near the 3'-end of the 23S rRNA, where it nucleates assembly of the 50S subunit. The protein is Large ribosomal subunit protein uL3 of Microcystis aeruginosa (strain NIES-843 / IAM M-2473).